Here is a 448-residue protein sequence, read N- to C-terminus: Protein king tubby (448 aa).

A disordered region spans residues 103 to 195; that stretch reads HELEDEESSP…NGTGGESEGD (93 aa). Positions 118 to 133 are enriched in low complexity; it reads QHQQSASHSANSTQSQ. The residue at position 141 (Ser141) is a Phosphoserine. Gly residues predominate over residues 182 to 191; that stretch reads NGTGNGTGGE.

This sequence belongs to the TUB family.

Its subcellular location is the cytoplasm. The protein localises to the nucleus. It localises to the cell projection. It is found in the cilium membrane. The protein resides in the rhabdomere. The chain is Protein king tubby from Drosophila erecta (Fruit fly).